The primary structure comprises 597 residues: mRNA-capping enzyme (597 aa).

The TPase stretch occupies residues 1 to 212; it reads MAYNKIPPRW…DEDGKKDSEP (212 aa). A Tyrosine-protein phosphatase domain is found at 25 to 183; that stretch reads LPLKTMLGPR…FRRYGDIEEA (159 aa). The active-site Phosphocysteine intermediate is the Cys126. Positions 181-221 are disordered; sequence EEAPPPPVLPDWCFEDEDEEDEDEDGKKDSEPGSSASFSKR. The segment covering 193–204 has biased composition (acidic residues); it reads CFEDEDEEDEDE. The tract at residues 229–597 is GTase; the sequence is GAIFLEGITV…PPPKRLHRPT (369 aa). Lys294 acts as the N6-GMP-lysine intermediate in catalysis. GTP contacts are provided by residues Arg299, Arg315, 343-345, 458-460, and 528-533; these read DGE, KWK, and RQRIDK. The segment at 330–386 is interaction with POLR2A; sequence RKDLRMHLSNTLLDGEMIIDKVNGQAVPRYLIYDIIKFNAQPVGDCDFNIRLQCIER. The disordered stretch occupies residues 573–597; sequence KRKYPLDPDTELMPPPPPKRLHRPT.

It in the N-terminal section; belongs to the non-receptor class of the protein-tyrosine phosphatase family. This sequence in the C-terminal section; belongs to the eukaryotic GTase family. As to quaternary structure, interacts with SUPT5H and RNMT. Interacts with POLR2A (via C-terminus); this enhances guanylyltransferase activity. Binds (via GTase domain) to the elongating phosphorylated form of RNA polymerase II; can form direct interactions with the phosphorylated POLR2A C-terminal domain and indirect interactions via bound RNA.

Its subcellular location is the nucleus. It catalyses the reaction a 5'-end triphospho-ribonucleoside in mRNA + H2O = a 5'-end diphospho-ribonucleoside in mRNA + phosphate + H(+). It carries out the reaction a 5'-end diphospho-ribonucleoside in mRNA + GTP + H(+) = a 5'-end (5'-triphosphoguanosine)-ribonucleoside in mRNA + diphosphate. With respect to regulation, RNA triphosphatase activity is inhibited by vanadate, iodoacetate and magnesium. In terms of biological role, bifunctional mRNA-capping enzyme exhibiting RNA 5'-triphosphate monophosphatase activity in the N-terminal part and mRNA guanylyltransferase activity in the C-terminal part. Catalyzes the first two steps of cap formation: by removing the gamma-phosphate from the 5'-triphosphate end of nascent mRNA to yield a diphosphate end, and by transferring the GMP moiety of GTP to the 5'-diphosphate terminus of RNA via a covalent enzyme-GMP reaction intermediate. In Mus musculus (Mouse), this protein is mRNA-capping enzyme (Rngtt).